A 48-amino-acid chain; its full sequence is Delta-actitoxin-Bgr2b (48 aa).

3 disulfides stabilise this stretch: Cys4–Cys45, Cys6–Cys35, and Cys28–Cys46.

The protein belongs to the sea anemone sodium channel inhibitory toxin family. Type I subfamily.

It localises to the secreted. The protein localises to the nematocyst. Binds voltage-dependently at site 3 of sodium channels (Nav) and inhibits the inactivation of the activated channels, thereby blocking neuronal transmission. Has effect on SCN4A/SCN1B, and SCN5A/SCN1B, has no effect on SCN2A/SCN1B, and SCN10A/SCN1B. Possesses the highest efficacy for the insect sodium channel para/tipE. Also interacts with sodium channels in cardiac cells. Shows lethality to crabs. The sequence is that of Delta-actitoxin-Bgr2b from Bunodosoma granuliferum (Red warty sea anemone).